The following is a 264-amino-acid chain: Short chain dehydrogenase/reductase AacuN (264 aa).

Positions 24, 70, 97, and 130 each coordinate NADP(+). Residues Ser146, Ser147, and Tyr161 each act as proton donor in the active site. The NADP(+) site is built by Tyr161, Lys165, and Thr196. Catalysis depends on Lys165, which acts as the Lowers pKa of active site Tyr.

The protein belongs to the short-chain dehydrogenases/reductases (SDR) family.

It carries out the reaction 3,8,9,10-tetrahydroxy-6-methyl-1,4-dihydroanthracen-1-one + NADPH + H(+) = (3R)-3,8,9,10-tetrahydroxy-6-methyl-1,2,3,4-tetrahydroanthracen-1-one + NADP(+). It functions in the pathway secondary metabolite biosynthesis. Functionally, atrochrysone carboxylic acid synthase; part of the gene cluster that mediates the biosynthesis of the tetrahydroxanthone dimer secalonic acid D. The pathway begins with the synthesis of atrochrysone thioester by the polyketide synthase AacuL. The atrochrysone carboxyl ACP thioesterase AacuM then breaks the thioester bond and releases the atrochrysone carboxylic acid from AacuL. Atrochrysone carboxylic acid is decarboxylated by the decarboxylase AacuI, and oxidized by the anthrone oxygenase AacuG to yield emodin. Emodin is then reduced to emodin hydroquinone by a yet unidentified oxidoreductase. A-ring reduction by the short chain dehydrogenase AacuN, dehydration by the scytalone dehydratase-like protein AacuK and probable spontaneous re-oxidation, results in overall deoxygenation to chrysophanol. Baeyer-Villiger oxidation by the Baeyer-Villiger monooxygenase (BVMO) AacuH then yields monodictyphenone. Monodictyphenone is transformed into compounds with the tetrahydroxanthone skeleton via methylesterification by the methyltransferase AacuQ, followed by the action of the flavin-dependent monooxygenase AacuC, the isomerase AacuP, and the short chain dehydrogenase/reductase AacuF or AacuD. AacuF and AacuD should accept the same compound as a substrate but perform the ketoreduction with a different stereoselectivity, thus yielding blennolides B and A, respectively. In the final step of the biosynthesis, the cytochrome P450 monooxygenase AacuE accepts blennolide B and/or blennolide A to conduct the dimerization reaction to furnish the tetrahydroxanthone dimers, secalonic acids D, B, and F. This Aspergillus aculeatus (strain ATCC 16872 / CBS 172.66 / WB 5094) protein is Short chain dehydrogenase/reductase AacuN.